A 576-amino-acid polypeptide reads, in one-letter code: Vesicular glutamate transporter 1 (576 aa).

Residues 1–63 (MEFRKEEFKK…CTCFGLPRRY (63 aa)) lie on the Cytoplasmic side of the membrane. The helical transmembrane segment at 64-84 (IIAIMSGLGFCISFGIRCNLG) threads the bilayer. Topologically, residues 85–116 (VAIVSMVNNNTVYKGNKLVIEQAQFNWDPETV) are vesicular. An N-linked (GlcNAc...) asparagine glycan is attached at N93. The chain crosses the membrane as a helical span at residues 117-137 (GMIHGSFFWGYIVTQIPGGYI). Residues 138–140 (CQK) lie on the Cytoplasmic side of the membrane. Residues 141–161 (FAANRVFGFAIVATSTLNMLI) form a helical membrane-spanning segment. The Vesicular portion of the chain corresponds to 162-168 (PSAARVH). Residues 169 to 189 (FACVICVRILQGLVEGVTYPA) traverse the membrane as a helical segment. The Cytoplasmic segment spans residues 190–208 (CHGIWSKWAPPLERSRLAT). Residues 209–229 (TAFCGSYAGAVVAMPLAGVLV) form a helical membrane-spanning segment. Topologically, residues 230 to 236 (QYSGWSS) are vesicular. Residues 237 to 257 (VFYVYGSFGITWYMFWILVSY) form a helical membrane-spanning segment. Residues 258-297 (ESPAQHPTISEEERKYIEESIGESTGFMNPMAKFKAPWRK) are Cytoplasmic-facing. Residues 298 to 320 (FFTSMPVYAIIVANFCRSWTFYL) traverse the membrane as a helical segment. Over 321-341 (LLISQPAYFEEVFGFAISKVG) the chain is Vesicular. A helical transmembrane segment spans residues 342–362 (LLSALPHLVMTIIVPIGGQIA). The Cytoplasmic portion of the chain corresponds to 363–378 (DFLRTKRIMSTTNVRK). The chain crosses the membrane as a helical span at residues 379 to 399 (MMNCGGFGMEATLLLVVGYSH). Topologically, residues 400–401 (SR) are vesicular. Residues 402 to 422 (GVAISFLVLAVGFSGFAISGF) form a helical membrane-spanning segment. Over 423-435 (NVNHLDIAPRYAS) the chain is Cytoplasmic. A helical transmembrane segment spans residues 436 to 456 (ILMGISNGVGTLSGMVCPLIV). The Vesicular segment spans residues 457 to 469 (GAMTKHKTREEWQ). Residues 470–490 (YVFLIASLVHYGGVVFYGIFA) traverse the membrane as a helical segment. Residues 491–576 (SGEKQPWAEP…YGTVAERDLS (86 aa)) lie on the Cytoplasmic side of the membrane. The interval 517 to 552 (ADESEEQTQAHGGYGSYGATQTTSQQNGGWATDWEK) is disordered. Polar residues predominate over residues 534–545 (GATQTTSQQNGG).

It belongs to the major facilitator superfamily. Sodium/anion cotransporter family. VGLUT subfamily.

It is found in the cytoplasmic vesicle. The protein resides in the secretory vesicle. The protein localises to the synaptic vesicle membrane. Its subcellular location is the cell membrane. It localises to the synapse. It is found in the synaptosome. The catalysed reaction is L-glutamate(out) = L-glutamate(in). The enzyme catalyses chloride(in) = chloride(out). It carries out the reaction 3 Na(+)(out) + phosphate(out) = 3 Na(+)(in) + phosphate(in). It catalyses the reaction phosphate(in) = phosphate(out). The catalysed reaction is K(+)(in) + H(+)(out) = K(+)(out) + H(+)(in). Chloride channel activity is allosterically activated by lumenal H(+) and Cl(-) leading to synaptic vesicles acidification. The L-glutamate transport activity is allosterically activated by lumenal H(+) and Cl(-). The allosteric activation by H(+) efficiently prevents non-vesicular efflux across the plasma membrane, thereby restricting L-glutamate transport activity to acidic membranes such as synaptic vesicles. Functionally, multifunctional transporter that transports L-glutamate as well as multiple ions such as chloride, proton, potassium, sodium and phosphate. At the synaptic vesicle membrane, mainly functions as an uniporter which transports preferentially L-glutamate but also phosphate from the cytoplasm into synaptic vesicles at presynaptic nerve terminals of excitatory neural cells. The L-glutamate or phosphate uniporter activity is electrogenic and is driven by the proton electrochemical gradient, mainly by the electrical gradient established by the vacuolar H(+)-ATPase across the synaptic vesicle membrane. In addition, functions as a chloride channel that allows a chloride permeation through the synaptic vesicle membrane that affects the proton electrochemical gradient and promotes synaptic vesicles acidification. Moreover, may function as a K(+)/H(+) antiport allowing to maintain the electrical gradient and to decrease chemical gradient and therefore sustain vesicular glutamate uptake. The vesicular K(+)/H(+) antiport activity is electroneutral. At the plasma membrane, following exocytosis, functions as a symporter of Na(+) and phosphate from the extracellular space to the cytoplasm allowing synaptic phosphate homeostasis regulation. The symporter activity is driven by an inside negative membrane potential and is electrogenic. Is necessary for synaptic signaling of visual-evoked responses from photoreceptors. The sequence is that of Vesicular glutamate transporter 1 from Xenopus laevis (African clawed frog).